The chain runs to 90 residues: Small ribosomal subunit protein bS16 (90 aa).

The protein belongs to the bacterial ribosomal protein bS16 family.

The protein is Small ribosomal subunit protein bS16 of Listeria innocua serovar 6a (strain ATCC BAA-680 / CLIP 11262).